The following is a 95-amino-acid chain: Aspartyl/glutamyl-tRNA(Asn/Gln) amidotransferase subunit C (95 aa).

Belongs to the GatC family. Heterotrimer of A, B and C subunits.

It catalyses the reaction L-glutamyl-tRNA(Gln) + L-glutamine + ATP + H2O = L-glutaminyl-tRNA(Gln) + L-glutamate + ADP + phosphate + H(+). The enzyme catalyses L-aspartyl-tRNA(Asn) + L-glutamine + ATP + H2O = L-asparaginyl-tRNA(Asn) + L-glutamate + ADP + phosphate + 2 H(+). In terms of biological role, allows the formation of correctly charged Asn-tRNA(Asn) or Gln-tRNA(Gln) through the transamidation of misacylated Asp-tRNA(Asn) or Glu-tRNA(Gln) in organisms which lack either or both of asparaginyl-tRNA or glutaminyl-tRNA synthetases. The reaction takes place in the presence of glutamine and ATP through an activated phospho-Asp-tRNA(Asn) or phospho-Glu-tRNA(Gln). The sequence is that of Aspartyl/glutamyl-tRNA(Asn/Gln) amidotransferase subunit C from Bartonella quintana (strain Toulouse) (Rochalimaea quintana).